A 197-amino-acid polypeptide reads, in one-letter code: Probable chorismate pyruvate-lyase (197 aa).

Over residues 1–14 (MRFDAADAHWRETP) the composition is skewed to basic and acidic residues. A disordered region spans residues 1 to 25 (MRFDAADAHWRETPRPGASGAQKDW). 3 residues coordinate substrate: Arg-73, Leu-111, and Glu-173.

This sequence belongs to the UbiC family.

Its subcellular location is the cytoplasm. The catalysed reaction is chorismate = 4-hydroxybenzoate + pyruvate. Its pathway is cofactor biosynthesis; ubiquinone biosynthesis. Its function is as follows. Removes the pyruvyl group from chorismate, with concomitant aromatization of the ring, to provide 4-hydroxybenzoate (4HB) for the ubiquinone pathway. In Burkholderia thailandensis (strain ATCC 700388 / DSM 13276 / CCUG 48851 / CIP 106301 / E264), this protein is Probable chorismate pyruvate-lyase.